Here is a 284-residue protein sequence, read N- to C-terminus: Averufin oxidase A (284 aa).

Positions 1 to 23 are cleaved as a signal peptide; the sequence is MPTYALLGATGATGSAILRCLLA. Asparagine 62, asparagine 86, and asparagine 190 each carry an N-linked (GlcNAc...) asparagine glycan.

The protein belongs to the avfA family.

It functions in the pathway mycotoxin biosynthesis. Its function is as follows. Averufin oxidase A; part of the fragmented gene cluster that mediates the biosynthesis of dothistromin (DOTH), a polyketide toxin very similar in structure to the aflatoxin precursor, versicolorin B. The first step of the pathway is the conversion of acetate to norsolorinic acid (NOR) and requires the fatty acid synthase subunits hexA and hexB, as well as the polyketide synthase pksA. PksA combines a hexanoyl starter unit and 7 malonyl-CoA extender units to synthesize the precursor NOR. The hexanoyl starter unit is provided to the acyl-carrier protein (ACP) domain by the fungal fatty acid synthase hexA/hexB. The second step is the conversion of NOR to averantin (AVN) and requires the norsolorinic acid ketoreductase nor1, which catalyzes the dehydration of norsolorinic acid to form (1'S)-averantin. The cytochrome P450 monooxygenase avnA then catalyzes the hydroxylation of AVN to 5'hydroxyaverantin (HAVN). The next step is performed by adhA that transforms HAVN to averufin (AVF). Averufin might then be converted to hydroxyversicolorone by cypX and avfA. Hydroxyversicolorone is further converted versiconal hemiacetal acetate (VHA) by moxY. VHA is then the substrate for the versiconal hemiacetal acetate esterase est1 to yield versiconal (VAL). Versicolorin B synthase vbsA then converts VAL to versicolorin B (VERB) by closing the bisfuran ring. Then, the activity of the versicolorin B desaturase verB leads to versicolorin A (VERA). DotB, a predicted chloroperoxidase, may perform epoxidation of the A-ring of VERA. Alternatively, a cytochrome P450, such as cypX or avnA could catalyze this step. It is also possible that another, uncharacterized, cytochrome P450 enzyme is responsible for this step. Opening of the epoxide could potentially be achieved by the epoxide hydrolase epoA. However, epoA seems not to be required for DOTH biosynthesis, but other epoxide hydrolases may have the ability to complement this hydrolysis. Alternatively, opening of the epoxide ring could be achieved non-enzymatically. The next step is the deoxygenation of ring A to yield the 5,8-dihydroxyanthraquinone which is most likely catalyzed by the NADPH dehydrogenase encoded by ver1. The last stages of DOTH biosynthesis are proposed to involve hydroxylation of the bisfuran. OrdB and norB might have oxidative roles here. An alternative possibility is that cytochrome P450 monoogenases such as avnA and cypX might perform these steps in addition to previously proposed steps. This Dothistroma septosporum (strain NZE10 / CBS 128990) (Red band needle blight fungus) protein is Averufin oxidase A.